The chain runs to 217 residues: Probable transaldolase (217 aa).

The Schiff-base intermediate with substrate role is filled by Lys83.

This sequence belongs to the transaldolase family. Type 3B subfamily.

The protein localises to the cytoplasm. It catalyses the reaction D-sedoheptulose 7-phosphate + D-glyceraldehyde 3-phosphate = D-erythrose 4-phosphate + beta-D-fructose 6-phosphate. Its pathway is carbohydrate degradation; pentose phosphate pathway; D-glyceraldehyde 3-phosphate and beta-D-fructose 6-phosphate from D-ribose 5-phosphate and D-xylulose 5-phosphate (non-oxidative stage): step 2/3. Its function is as follows. Transaldolase is important for the balance of metabolites in the pentose-phosphate pathway. The protein is Probable transaldolase of Erythrobacter litoralis (strain HTCC2594).